The primary structure comprises 119 residues: MEIHSNIILLLLIALFAIFVKMEDEEKPPNLTRMPEGVNFACSGKKPGFYADEGFDCQVYHMCSPEGQLTTYLCGPGTIFNQKKLVCDLPTNYNCADAAKDAEEANANVFKTQSSTSEP.

A signal peptide spans 1-22 (MEIHSNIILLLLIALFAIFVKM). One can recognise a Chitin-binding type-2 domain in the interval 39-97 (NFACSGKKPGFYADEGFDCQVYHMCSPEGQLTTYLCGPGTIFNQKKLVCDLPTNYNCAD). A disulfide bond links C74 and C87.

The protein belongs to the scoloptoxin-01 family. In terms of processing, contains 3 disulfide bonds. As to expression, expressed by the venom gland.

The protein localises to the secreted. The chain is U-scoloptoxin(01)-Er1a from Ethmostigmus rubripes (Giant centipede).